The primary structure comprises 226 residues: Thymidylate kinase (226 aa).

An ATP-binding site is contributed by 12-19 (GIDGAGKS).

This sequence belongs to the thymidylate kinase family.

It carries out the reaction dTMP + ATP = dTDP + ADP. Phosphorylation of dTMP to form dTDP in both de novo and salvage pathways of dTTP synthesis. The sequence is that of Thymidylate kinase from Verminephrobacter eiseniae (strain EF01-2).